Reading from the N-terminus, the 246-residue chain is Polyhedrin (246 aa).

Belongs to the polyhedrin family.

In terms of biological role, major component of the virus occlusion bodies, which are large proteinaceous structures (polyhedra), that protect the virus from the outside environment for extended periods until they are ingested by insect larvae. The polypeptide is Polyhedrin (PH) (Lepidoptera (butterflies and moths)).